We begin with the raw amino-acid sequence, 162 residues long: Anaerobic nitrite reductase NSHB2 (162 aa).

In terms of domain architecture, Globin spans serine 16–lysine 159. Residues glutamate 49–serine 53 carry the Homodimerization motif. Residues serine 59, lysine 73, histidine 77, arginine 100, threonine 104, and histidine 105 each contribute to the heme b site. A Homodimerization motif is present at residues aspartate 112 to glutamate 124.

Belongs to the plant globin family. In terms of assembly, homodimer. It depends on heme b as a cofactor. In terms of tissue distribution, mainly expressed in germinating seeds, seedlings, roots, flowers and leaves.

It is found in the cytoplasm. Its subcellular location is the nucleus. The enzyme catalyses Fe(III)-heme b-[protein] + nitric oxide + H2O = Fe(II)-heme b-[protein] + nitrite + 2 H(+). Its function is as follows. Phytoglobin that reduces nitrite to nitric oxide under anoxic conditions (e.g. during flooding or in waterlogged soil). May not function as an oxygen storage or transport protein. Has an unusually high affinity for O(2) through an hexacoordinate heme iron because of a very low dissociation constant. Promotes tolerance to low potassium K(+) conditions. The polypeptide is Anaerobic nitrite reductase NSHB2 (Oryza sativa subsp. indica (Rice)).